We begin with the raw amino-acid sequence, 217 residues long: Adenylate kinase (217 aa).

Gly10–Thr15 is a binding site for ATP. The segment at Ser30–Val59 is NMP. Residues Thr31, Arg36, Leu57 to Val59, Gly85 to Arg88, and Gln92 contribute to the AMP site. The segment at Gly126–Asp163 is LID. An ATP-binding site is contributed by Arg127. Zn(2+)-binding residues include Cys130 and Cys133. Thr136–Tyr137 provides a ligand contact to ATP. Zn(2+) is bound by residues Cys150 and Cys153. Arg160 and Arg171 together coordinate AMP. Lys199 serves as a coordination point for ATP.

The protein belongs to the adenylate kinase family. Monomer.

Its subcellular location is the cytoplasm. The enzyme catalyses AMP + ATP = 2 ADP. The protein operates within purine metabolism; AMP biosynthesis via salvage pathway; AMP from ADP: step 1/1. Catalyzes the reversible transfer of the terminal phosphate group between ATP and AMP. Plays an important role in cellular energy homeostasis and in adenine nucleotide metabolism. The sequence is that of Adenylate kinase from Thermoanaerobacter pseudethanolicus (strain ATCC 33223 / 39E) (Clostridium thermohydrosulfuricum).